Here is a 207-residue protein sequence, read N- to C-terminus: Small ribosomal subunit protein uS4 (207 aa).

The S4 RNA-binding domain occupies 98 to 164 (RRLDNVVYRM…AKFKNLVEVN (67 aa)).

It belongs to the universal ribosomal protein uS4 family. In terms of assembly, part of the 30S ribosomal subunit. Contacts protein S5. The interaction surface between S4 and S5 is involved in control of translational fidelity.

Functionally, one of the primary rRNA binding proteins, it binds directly to 16S rRNA where it nucleates assembly of the body of the 30S subunit. Its function is as follows. With S5 and S12 plays an important role in translational accuracy. The polypeptide is Small ribosomal subunit protein uS4 (Clostridioides difficile (strain 630) (Peptoclostridium difficile)).